The following is a 68-amino-acid chain: Small, acid-soluble spore protein I (68 aa).

Belongs to the SspI family.

It localises to the spore core. This Halalkalibacterium halodurans (strain ATCC BAA-125 / DSM 18197 / FERM 7344 / JCM 9153 / C-125) (Bacillus halodurans) protein is Small, acid-soluble spore protein I.